A 341-amino-acid chain; its full sequence is Nicotinate-nucleotide--dimethylbenzimidazole phosphoribosyltransferase (341 aa).

The active-site Proton acceptor is Glu306.

The protein belongs to the CobT family.

It carries out the reaction 5,6-dimethylbenzimidazole + nicotinate beta-D-ribonucleotide = alpha-ribazole 5'-phosphate + nicotinate + H(+). It participates in nucleoside biosynthesis; alpha-ribazole biosynthesis; alpha-ribazole from 5,6-dimethylbenzimidazole: step 1/2. Its function is as follows. Catalyzes the synthesis of alpha-ribazole-5'-phosphate from nicotinate mononucleotide (NAMN) and 5,6-dimethylbenzimidazole (DMB). The chain is Nicotinate-nucleotide--dimethylbenzimidazole phosphoribosyltransferase from Methylocella silvestris (strain DSM 15510 / CIP 108128 / LMG 27833 / NCIMB 13906 / BL2).